The primary structure comprises 1464 residues: DNA polymerase III PolC-type (1464 aa).

The Exonuclease domain maps to 426-582 (YVVFDVETTG…YDAEATGRLL (157 aa)).

This sequence belongs to the DNA polymerase type-C family. PolC subfamily.

It is found in the cytoplasm. It carries out the reaction DNA(n) + a 2'-deoxyribonucleoside 5'-triphosphate = DNA(n+1) + diphosphate. In terms of biological role, required for replicative DNA synthesis. This DNA polymerase also exhibits 3' to 5' exonuclease activity. This is DNA polymerase III PolC-type from Streptococcus thermophilus (strain ATCC BAA-491 / LMD-9).